The following is a 198-amino-acid chain: Na(+)-translocating NADH-quinone reductase subunit E (198 aa).

6 helical membrane passes run 11–31 (SVFI…FLAV), 35–55 (VSTA…AVPV), 77–97 (FLNF…LEMI), 110–130 (GIFL…SFMV), 140–160 (VVYG…LAGL), and 176–196 (LGIT…FSGI).

Belongs to the NqrDE/RnfAE family. In terms of assembly, composed of six subunits; NqrA, NqrB, NqrC, NqrD, NqrE and NqrF.

It localises to the cell inner membrane. The catalysed reaction is a ubiquinone + n Na(+)(in) + NADH + H(+) = a ubiquinol + n Na(+)(out) + NAD(+). Its function is as follows. NQR complex catalyzes the reduction of ubiquinone-1 to ubiquinol by two successive reactions, coupled with the transport of Na(+) ions from the cytoplasm to the periplasm. NqrA to NqrE are probably involved in the second step, the conversion of ubisemiquinone to ubiquinol. In Haemophilus ducreyi (strain 35000HP / ATCC 700724), this protein is Na(+)-translocating NADH-quinone reductase subunit E.